The sequence spans 174 residues: MAAANKGNKPRVRSIRFAAGHDAEGSHSHVHFDEKLHDSVVMVTQESDSSFLVKVGFLKILHRYEITFTLPPVHRLSKDVREAPVPSLHLKLLSVVPVPEGYSVKCEYSAHKEGVLKEEILLACEGGTGTCVRVTVQARVMDRHHGTPMLLDGVKCVGAELEYDSEHSDWHGFD.

Position 2 is an N-acetylalanine (alanine 2). Threonine 147 is modified (phosphothreonine).

Belongs to the ADISSP family.

Its subcellular location is the secreted. Functionally, adipocyte-secreted protein (adipokine) that acts as a key regulator for white adipose tissue (WAT) thermogenesis and glucose homeostasis at least in part through activation of protein kinase A (PKA). The chain is Adipose-secreted signaling protein from Homo sapiens (Human).